The following is a 740-amino-acid chain: Phosphoribosylformylglycinamidine synthase subunit PurL (740 aa).

H50 is a catalytic residue. Y53 and K92 together coordinate ATP. E94 is a Mg(2+) binding site. Substrate contacts are provided by residues 95 to 98 (SHNH) and R117. H96 functions as the Proton acceptor in the catalytic mechanism. D118 provides a ligand contact to Mg(2+). Q241 lines the substrate pocket. A Mg(2+)-binding site is contributed by D269. 313–315 (ESQ) provides a ligand contact to substrate. The ATP site is built by D495 and G532. N533 contributes to the Mg(2+) binding site. S535 lines the substrate pocket.

It belongs to the FGAMS family. In terms of assembly, monomer. Part of the FGAM synthase complex composed of 1 PurL, 1 PurQ and 2 PurS subunits.

It localises to the cytoplasm. It catalyses the reaction N(2)-formyl-N(1)-(5-phospho-beta-D-ribosyl)glycinamide + L-glutamine + ATP + H2O = 2-formamido-N(1)-(5-O-phospho-beta-D-ribosyl)acetamidine + L-glutamate + ADP + phosphate + H(+). It functions in the pathway purine metabolism; IMP biosynthesis via de novo pathway; 5-amino-1-(5-phospho-D-ribosyl)imidazole from N(2)-formyl-N(1)-(5-phospho-D-ribosyl)glycinamide: step 1/2. Its function is as follows. Part of the phosphoribosylformylglycinamidine synthase complex involved in the purines biosynthetic pathway. Catalyzes the ATP-dependent conversion of formylglycinamide ribonucleotide (FGAR) and glutamine to yield formylglycinamidine ribonucleotide (FGAM) and glutamate. The FGAM synthase complex is composed of three subunits. PurQ produces an ammonia molecule by converting glutamine to glutamate. PurL transfers the ammonia molecule to FGAR to form FGAM in an ATP-dependent manner. PurS interacts with PurQ and PurL and is thought to assist in the transfer of the ammonia molecule from PurQ to PurL. The polypeptide is Phosphoribosylformylglycinamidine synthase subunit PurL (Brucella abortus (strain S19)).